Here is a 917-residue protein sequence, read N- to C-terminus: Bifunctional aspartokinase/homoserine dehydrogenase 2, chloroplastic (917 aa).

A chloroplast-targeting transit peptide spans 1 to 89; the sequence is MQGLAVSCQL…EVNTYLPKGD (89 aa). The tract at residues 90–338 is aspartokinase; sequence MWSVHKFGGT…VSEAVILSTL (249 aa). An interface region spans residues 339-563; that stretch reads SYQEAWEMSY…LSKTTLAVGI (225 aa). ACT domains follow at residues 413-488 and 494-571; these read VEGT…VING and AVGL…LIGG. Residues 564 to 917 form a homoserine dehydrogenase region; it reads IGPGLIGGAL…RLASYLGAPS (354 aa). NAD(+) is bound by residues I569 and T650. Residues I569, T650, and K674 each coordinate NADP(+). Residues I569, T650, and K674 each contribute to the NADPH site. Positions 701, 704, 706, and 708 each coordinate Na(+). Residues G759 and E762 each coordinate NADP(+). Residues E762 and D773 each coordinate L-homoserine. Catalysis depends on K777, which acts as the Proton donor. An NAD(+)-binding site is contributed by G894. G894 contributes to the NADP(+) binding site. An NADPH-binding site is contributed by G894.

In the N-terminal section; belongs to the aspartokinase family. It in the C-terminal section; belongs to the homoserine dehydrogenase family. Homo- or heterodimer. A metal cation serves as cofactor.

The protein localises to the plastid. It localises to the chloroplast. The enzyme catalyses L-homoserine + NADP(+) = L-aspartate 4-semialdehyde + NADPH + H(+). The catalysed reaction is L-homoserine + NAD(+) = L-aspartate 4-semialdehyde + NADH + H(+). It carries out the reaction L-aspartate + ATP = 4-phospho-L-aspartate + ADP. It functions in the pathway amino-acid biosynthesis; L-lysine biosynthesis via DAP pathway; (S)-tetrahydrodipicolinate from L-aspartate: step 1/4. The protein operates within amino-acid biosynthesis; L-methionine biosynthesis via de novo pathway; L-homoserine from L-aspartate: step 1/3. Its pathway is amino-acid biosynthesis; L-methionine biosynthesis via de novo pathway; L-homoserine from L-aspartate: step 3/3. It participates in amino-acid biosynthesis; L-threonine biosynthesis; L-threonine from L-aspartate: step 1/5. It functions in the pathway amino-acid biosynthesis; L-threonine biosynthesis; L-threonine from L-aspartate: step 3/5. Its function is as follows. Bifunctional aspartate kinase and homoserine dehydrogenase that catalyzes the first and the third steps toward the synthesis of lysine, methionine and threonine from aspartate. This chain is Bifunctional aspartokinase/homoserine dehydrogenase 2, chloroplastic (AKHSDH2), found in Zea mays (Maize).